Reading from the N-terminus, the 372-residue chain is Silphinene synthase peniA (372 aa).

Residues Asp-116, Glu-121, Asn-263, Ser-267, and Glu-271 each coordinate Mg(2+). The DDXXE motif signature appears at 116–121 (DDQFDE).

The protein belongs to the terpene synthase family. Mg(2+) serves as cofactor.

It carries out the reaction (2E,6E)-farnesyl diphosphate = silphinene + diphosphate. It functions in the pathway secondary metabolite biosynthesis; terpenoid biosynthesis. Its function is as follows. Sesquiterpene cyclase; part of the gene cluster that mediates the biosynthesis of penifulvin A, a potent insecticidal sesquiterpene that features a [5.5.5.6]dioxafenestrane ring. Within the pathway, peniA catalyzes the first step and generates the angular triquinane scaffold silphinene via cyclization of the linear farnesyl pyrophosphate (FPP). The cytochrome P450 monooxygenase peniB and the flavin-dependent monooxygenase peniC then catalyze a series of oxidation reactions to transform silphinene into penifulvin A. The sequence is that of Silphinene synthase peniA from Penicillium patulum (Penicillium griseofulvum).